Reading from the N-terminus, the 884-residue chain is Valine--tRNA ligase (884 aa).

Positions 46 to 56 (PNVTGKLHLGH) match the 'HIGH' region motif. Positions 520–524 (KMSKS) match the 'KMSKS' region motif. ATP is bound at residue Lys523. Residues 809 to 844 (LADLLNVEEELARLEKELAKWQKELNMVGKKLSNER) are a coiled coil.

The protein belongs to the class-I aminoacyl-tRNA synthetase family. ValS type 1 subfamily. As to quaternary structure, monomer.

The protein resides in the cytoplasm. It catalyses the reaction tRNA(Val) + L-valine + ATP = L-valyl-tRNA(Val) + AMP + diphosphate. Functionally, catalyzes the attachment of valine to tRNA(Val). As ValRS can inadvertently accommodate and process structurally similar amino acids such as threonine, to avoid such errors, it has a 'posttransfer' editing activity that hydrolyzes mischarged Thr-tRNA(Val) in a tRNA-dependent manner. The polypeptide is Valine--tRNA ligase (Streptococcus agalactiae serotype Ia (strain ATCC 27591 / A909 / CDC SS700)).